A 398-amino-acid polypeptide reads, in one-letter code: Histidinol dehydrogenase (398 aa).

NAD(+) is bound by residues Tyr-114, Gln-176, and Asn-199. The substrate site is built by Thr-222, Gln-244, and His-247. Gln-244 and His-247 together coordinate Zn(2+). Residues Glu-298 and His-299 each act as proton acceptor in the active site. Substrate is bound by residues His-299, Asp-331, Glu-384, and His-389. Position 331 (Asp-331) interacts with Zn(2+). His-389 is a binding site for Zn(2+).

Belongs to the histidinol dehydrogenase family. Zn(2+) serves as cofactor.

It catalyses the reaction L-histidinol + 2 NAD(+) + H2O = L-histidine + 2 NADH + 3 H(+). The protein operates within amino-acid biosynthesis; L-histidine biosynthesis; L-histidine from 5-phospho-alpha-D-ribose 1-diphosphate: step 9/9. Functionally, catalyzes the sequential NAD-dependent oxidations of L-histidinol to L-histidinaldehyde and then to L-histidine. The protein is Histidinol dehydrogenase (hisD) of Saccharolobus solfataricus (strain ATCC 35092 / DSM 1617 / JCM 11322 / P2) (Sulfolobus solfataricus).